The following is an 852-amino-acid chain: Exported protein YdbA (852 aa).

A signal peptide spans 1 to 21 (MQRKTLLSACIALALSGQGWA). Disordered stretches follow at residues 30 to 50 (TTGE…KLSP), 91 to 145 (DDDH…FNND), 307 to 354 (TITN…QDGD), 407 to 449 (TNGG…KVIQ), and 506 to 531 (NGGT…VDGK). Positions 307-319 (TITNGGTGTQING) are enriched in low complexity. Polar residues predominate over residues 339-348 (GTEINGNNGK). The segment covering 506–516 (NGGTGTQINGN) has biased composition (low complexity). The span at 517–526 (DATANNSGKT) shows a compositional bias: polar residues.

The protein resides in the secreted. In terms of biological role, the full-length protein (which is about 2000 amino acids long) is part of the autotransporter family. The sequence is that of Exported protein YdbA (ydbA) from Escherichia coli (strain K12).